Reading from the N-terminus, the 203-residue chain is ATP-dependent Clp protease proteolytic subunit (203 aa).

S107 (nucleophile) is an active-site residue. H132 is an active-site residue.

Belongs to the peptidase S14 family. Fourteen ClpP subunits assemble into 2 heptameric rings which stack back to back to give a disk-like structure with a central cavity, resembling the structure of eukaryotic proteasomes.

The protein localises to the cytoplasm. The enzyme catalyses Hydrolysis of proteins to small peptides in the presence of ATP and magnesium. alpha-casein is the usual test substrate. In the absence of ATP, only oligopeptides shorter than five residues are hydrolyzed (such as succinyl-Leu-Tyr-|-NHMec, and Leu-Tyr-Leu-|-Tyr-Trp, in which cleavage of the -Tyr-|-Leu- and -Tyr-|-Trp bonds also occurs).. Cleaves peptides in various proteins in a process that requires ATP hydrolysis. Has a chymotrypsin-like activity. Plays a major role in the degradation of misfolded proteins. The sequence is that of ATP-dependent Clp protease proteolytic subunit from Thermotoga maritima (strain ATCC 43589 / DSM 3109 / JCM 10099 / NBRC 100826 / MSB8).